The following is an 86-amino-acid chain: Defensin-like protein 259 (86 aa).

An N-terminal signal peptide occupies residues 1–25 (MKNASLKLPLLIFILVITSNLGAEA). 3 disulfide bridges follow: C60–C76, C66–C83, and C70–C85.

The protein belongs to the DEFL family.

It localises to the secreted. This Arabidopsis thaliana (Mouse-ear cress) protein is Defensin-like protein 259.